We begin with the raw amino-acid sequence, 484 residues long: L-carnitine dehydrogenase/betainyl-CoA thioesterase (484 aa).

The interval 1–322 (MKIAAIGGGV…ENRFYARNGK (322 aa)) is L-carnitine dehydrogenase. 7-12 (GGGVIG) serves as a coordination point for NAD(+). The betainyl-CoA thioesterase stretch occupies residues 323–484 (VQADYPLRLH…RAVRLKETSA (162 aa)).

It in the N-terminal section; belongs to the 3-hydroxyacyl-CoA dehydrogenase family. L-carnitine dehydrogenase subfamily. In the C-terminal section; belongs to the betainyl-CoA thioesterase family. In terms of assembly, homodimer.

Its subcellular location is the cytoplasm. The catalysed reaction is carnitine + NAD(+) = 3-dehydrocarnitine + NADH + H(+). It catalyses the reaction N,N,N-trimethylglycyl-CoA + H2O = glycine betaine + CoA + H(+). It functions in the pathway amine and polyamine metabolism; carnitine metabolism. In terms of biological role, multifunctional enzyme that catalyzes the NAD(+)-dependent oxidation of L-carnitine to 3-dehydrocarnitine and the cleavage of betainyl-CoA (N,N,N-trimethylglycyl-CoA) into glycine betaine and coenzyme A. This Agrobacterium fabrum (strain C58 / ATCC 33970) (Agrobacterium tumefaciens (strain C58)) protein is L-carnitine dehydrogenase/betainyl-CoA thioesterase.